The following is a 570-amino-acid chain: Proline--tRNA ligase (570 aa).

It belongs to the class-II aminoacyl-tRNA synthetase family. ProS type 1 subfamily. In terms of assembly, homodimer.

It is found in the cytoplasm. It catalyses the reaction tRNA(Pro) + L-proline + ATP = L-prolyl-tRNA(Pro) + AMP + diphosphate. Functionally, catalyzes the attachment of proline to tRNA(Pro) in a two-step reaction: proline is first activated by ATP to form Pro-AMP and then transferred to the acceptor end of tRNA(Pro). As ProRS can inadvertently accommodate and process non-cognate amino acids such as alanine and cysteine, to avoid such errors it has two additional distinct editing activities against alanine. One activity is designated as 'pretransfer' editing and involves the tRNA(Pro)-independent hydrolysis of activated Ala-AMP. The other activity is designated 'posttransfer' editing and involves deacylation of mischarged Ala-tRNA(Pro). The misacylated Cys-tRNA(Pro) is not edited by ProRS. The chain is Proline--tRNA ligase from Clostridium perfringens (strain ATCC 13124 / DSM 756 / JCM 1290 / NCIMB 6125 / NCTC 8237 / Type A).